A 421-amino-acid polypeptide reads, in one-letter code: Cell division protein FtsZ (421 aa).

Residues 26–30, 132–134, Glu-163, Arg-167, and Asn-211 contribute to the GTP site; these read GGGGN and GTG.

Belongs to the FtsZ family. In terms of assembly, homodimer. Polymerizes to form a dynamic ring structure in a strictly GTP-dependent manner. Interacts directly with several other division proteins.

The protein localises to the cytoplasm. Its function is as follows. Essential cell division protein that forms a contractile ring structure (Z ring) at the future cell division site. The regulation of the ring assembly controls the timing and the location of cell division. One of the functions of the FtsZ ring is to recruit other cell division proteins to the septum to produce a new cell wall between the dividing cells. Binds GTP and shows GTPase activity. In Haemophilus influenzae (strain ATCC 51907 / DSM 11121 / KW20 / Rd), this protein is Cell division protein FtsZ.